The primary structure comprises 323 residues: Probable cell division protein WhiA (323 aa).

Residues 275-309 constitute a DNA-binding region (H-T-H motif); sequence TLKELGEMLTTGQVSKSGINHRLRKLDQIAERLRS.

It belongs to the WhiA family.

Functionally, involved in cell division and chromosome segregation. This Listeria monocytogenes serotype 4b (strain CLIP80459) protein is Probable cell division protein WhiA.